A 240-amino-acid polypeptide reads, in one-letter code: Fimbriae Y protein (240 aa).

It is found in the fimbrium. This Salmonella typhimurium (strain LT2 / SGSC1412 / ATCC 700720) protein is Fimbriae Y protein (fimY).